A 2193-amino-acid chain; its full sequence is Genome polyprotein (2193 aa).

Residues 1 to 22 are disordered; it reads MGSQVSTQRSGSHENSNSATEG. Gly-2 carries N-myristoyl glycine; by host lipidation. Residues 2 to 1503 are Cytoplasmic-facing; sequence GSQVSTQRSG…HLNRAVLVMQ (1502 aa). Amphipathic alpha-helix regions lie at residues 566–588 and 568–588; these read GDRVADVIESSIGDSVSRALTQA and RVADVIESSIGDSVSRALTQA. Residues His-883 and Asp-901 each act as for protease 2A activity in the active site. Residues Cys-918 and Cys-920 each contribute to the Zn(2+) site. The active-site For protease 2A activity is Cys-972. The Zn(2+) site is built by Cys-978 and His-980. A membrane-binding region spans residues 1112–1184; it reads SASWLKKFND…EQSAASQEDL (73 aa). The oligomerization stretch occupies residues 1112-1250; sequence SASWLKKFND…SPGTGKSLAT (139 aa). Residues 1133–1137 are RNA-binding; that stretch reads SNKIS. Positions 1216–1374 constitute an SF3 helicase domain; it reads EKRMNNYMQF…YKTDLGRLDA (159 aa). 1240–1247 is a binding site for ATP; it reads GSPGTGKS. Positions 1381, 1392, 1393, and 1397 each coordinate Zn(2+). Residues 1381–1397 form a C4-type; degenerate zinc finger; that stretch reads CSENNTANFKRCSPLVC. Residues 1424–1431 form an RNA-binding region; that stretch reads EYSNRSAI. The interval 1435-1440 is oligomerization; that stretch reads IEALFQ. An intramembrane segment occupies 1504-1519; sequence SIATVVAVVSLVYVIY. At 1520-2193 the chain is on the cytoplasmic side; sequence KLFAGFQGAY…NLRRNWLELF (674 aa). The residue at position 1529 (Tyr-1529) is an O-(5'-phospho-RNA)-tyrosine. The Peptidase C3 domain maps to 1549–1727; it reads GPSLDFALSL…FCAGLKRSYF (179 aa). Residues His-1588, Glu-1619, and Cys-1695 each act as for protease 3C activity in the active site. Residues 1958–2073 enclose the RdRp catalytic domain; sequence GSLFAFDYSG…ASYPFPIDCL (116 aa). Residues Asp-1964 and Asp-2060 each contribute to the Mg(2+) site.

Belongs to the picornaviruses polyprotein family. As to quaternary structure, interacts with capsid protein VP1 and capsid protein VP3 to form heterotrimeric protomers. Interacts with capsid protein VP0, and capsid protein VP3 to form heterotrimeric protomers. Five protomers subsequently associate to form pentamers which serve as building blocks for the capsid. Interacts with capsid protein VP2, capsid protein VP3 and capsid protein VP4 following cleavage of capsid protein VP0. Interacts with host SCARB2. Interacts with host ARF6; this interaction mediates viral endocytosis. In terms of assembly, interacts with capsid protein VP1 and capsid protein VP3 in the mature capsid. Interacts with host SCARB2. As to quaternary structure, interacts with capsid protein VP0 and capsid protein VP1 to form heterotrimeric protomers. Five protomers subsequently associate to form pentamers which serve as building blocks for the capsid. Interacts with capsid protein VP4 in the mature capsid. Interacts with protein 2C; this interaction may be important for virion morphogenesis. Interacts with capsid protein VP1 and capsid protein VP3. In terms of assembly, homodimer. As to quaternary structure, interacts with host BAX; this interaction activates the mitochondrial apoptotic pathway. Interacts with host ILF2. Homohexamer; forms a hexameric ring structure with 6-fold symmetry characteristic of AAA+ ATPases. Interacts (via N-terminus) with host RTN3 (via reticulon domain); this interaction is important for viral replication. Interacts with capsid protein VP3; this interaction may be important for virion morphogenesis. In terms of assembly, interacts with protein 3CD. As to quaternary structure, homodimer. Interacts with host GBF1. Interacts (via GOLD domain) with host ACBD3 (via GOLD domain); this interaction allows the formation of a viral protein 3A/ACBD3 heterotetramer with a 2:2 stoichiometry, which will stimulate the recruitment of host PI4KB in order to synthesize PI4P at the viral RNA replication sites. Interacts with RNA-directed RNA polymerase. In terms of assembly, interacts with host IFIH1/MDA5; this interaction inhibits host IFIH1. Interacts with host RIGI. As to quaternary structure, interacts with protein 3AB and with RNA-directed RNA polymerase. Interacts with Viral protein genome-linked and with protein 3CD. Mg(2+) is required as a cofactor. Post-translationally, specific enzymatic cleavages in vivo by the viral proteases yield processing intermediates and the mature proteins. Myristoylation is required for the formation of pentamers during virus assembly. Further assembly of 12 pentamers and a molecule of genomic RNA generates the provirion. In terms of processing, during virion maturation, immature virions are rendered infectious following cleavage of VP0 into VP4 and VP2. This maturation seems to be an autocatalytic event triggered by the presence of RNA in the capsid and it is followed by a conformational change infectious virion. Post-translationally, myristoylation is required during RNA encapsidation and formation of the mature virus particle. VPg is uridylylated by the polymerase into VPg-pUpU. This acts as a nucleotide-peptide primer for the genomic RNA replication.

The protein resides in the virion. It localises to the host cytoplasm. It is found in the host cytoplasmic vesicle membrane. Its subcellular location is the host nucleus. It catalyses the reaction a ribonucleoside 5'-triphosphate + H2O = a ribonucleoside 5'-diphosphate + phosphate + H(+). It carries out the reaction Selective cleavage of Tyr-|-Gly bond in the picornavirus polyprotein.. The catalysed reaction is RNA(n) + a ribonucleoside 5'-triphosphate = RNA(n+1) + diphosphate. The enzyme catalyses Selective cleavage of Gln-|-Gly bond in the poliovirus polyprotein. In other picornavirus reactions Glu may be substituted for Gln, and Ser or Thr for Gly.. Its activity is regulated as follows. Replication or transcription is subject to high level of random mutations by the nucleotide analog ribavirin. In terms of biological role, forms an icosahedral capsid of pseudo T=3 symmetry with capsid proteins VP2 and VP3. The capsid is 300 Angstroms in diameter, composed of 60 copies of each capsid protein and enclosing the viral positive strand RNA genome. Capsid protein VP1 mainly forms the vertices of the capsid. Capsid protein VP1, together with VP2, interacts with host cell receptor SCARB2 to provide virion attachment to target host cells. This attachment induces virion internalization. This attachment induces virion internalization. After binding to its receptor, the capsid undergoes conformational changes. Capsid protein VP1 N-terminus (that contains an amphipathic alpha-helix) and capsid protein VP4 are externalized. Together, they shape a pore in the host membrane through which viral genome is translocated to host cell cytoplasm. Functionally, forms an icosahedral capsid of pseudo T=3 symmetry with capsid proteins VP2 and VP3. The capsid is 300 Angstroms in diameter, composed of 60 copies of each capsid protein and enclosing the viral positive strand RNA genome. Capsid protein VP2, together with VP1, interacts with host cell receptor SCARB2 to provide virion attachment to target host cells. Forms an icosahedral capsid of pseudo T=3 symmetry with capsid proteins VP2 and VP3. The capsid is 300 Angstroms in diameter, composed of 60 copies of each capsid protein and enclosing the viral positive strand RNA genome. Its function is as follows. Lies on the inner surface of the capsid shell. After binding to the host receptor, the capsid undergoes conformational changes. Capsid protein VP4 is released, Capsid protein VP1 N-terminus is externalized, and together, they shape a pore in the host membrane through which the viral genome is translocated into the host cell cytoplasm. In terms of biological role, component of immature procapsids, which is cleaved into capsid proteins VP4 and VP2 after maturation. Allows the capsid to remain inactive before the maturation step. Functionally, cysteine protease that cleaves viral polyprotein and specific host proteins. It is responsible for the autocatalytic cleavage between the P1 and P2 regions, which is the first cleavage occurring in the polyprotein. Also cleaves the host translation initiation factor EIF4G1, in order to shut down the capped cellular mRNA translation. Inhibits the host nucleus-cytoplasm protein and RNA trafficking by cleaving host members of the nuclear pores. Counteracts stress granule formation probably by antagonizing its assembly or promoting its dissassembly. Cleaves and inhibits host IFIH1/MDA5, thereby inhibiting the type-I IFN production and the establishment of the antiviral state. Cleaves and inhibits host MAVS, thereby inhibiting the type-I IFN production and the establishment of the antiviral state. Plays an essential role in the virus replication cycle by acting as a viroporin. Creates a pore in the host endoplasmic reticulum and as a consequence releases Ca2+ in the cytoplasm of infected cell. In turn, high levels of cytoplasmic calcium may trigger membrane trafficking and transport of viral ER-associated proteins to viroplasms, sites of viral genome replication. Also activates the mitochondrial apoptotic pathway by activating host BAX. Its function is as follows. Induces and associates with structural rearrangements of intracellular membranes. Displays RNA-binding, nucleotide binding and NTPase activities. May play a role in virion morphogenesis and viral RNA encapsidation by interacting with the capsid protein VP3. In terms of biological role, localizes the viral replication complex to the surface of membranous vesicles. Together with protein 3CD binds the Cis-Active RNA Element (CRE) which is involved in RNA synthesis initiation. Acts as a cofactor to stimulate the activity of 3D polymerase, maybe through a nucleid acid chaperone activity. Functionally, localizes the viral replication complex to the surface of membranous vesicles. It inhibits host cell endoplasmic reticulum-to-Golgi apparatus transport and causes the disassembly of the Golgi complex, possibly through GBF1 interaction. This would result in depletion of MHC, trail receptors and IFN receptors at the host cell surface. Plays an essential role in viral RNA replication by recruiting ACBD3 and PI4KB at the viral replication sites, thereby allowing the formation of the rearranged membranous structures where viral replication takes place. Acts as a primer for viral RNA replication and remains covalently bound to viral genomic RNA. VPg is uridylylated prior to priming replication into VPg-pUpU. The oriI viral genomic sequence may act as a template for this. The VPg-pUpU is then used as primer on the genomic RNA poly(A) by the RNA-dependent RNA polymerase to replicate the viral genome. During genome replication, the VPg-RNA linkage is removed by the host TDP2, thereby accelerating replication. During the late stage of the replication cycle, host TDP2 is excluded from sites of viral RNA synthesis and encapsidation, allowing for the generation of progeny virions. Its function is as follows. Involved in the viral replication complex and viral polypeptide maturation. It exhibits protease activity with a specificity and catalytic efficiency that is different from protease 3C. Protein 3CD lacks polymerase activity. Protein 3CD binds to the 5'UTR of the viral genome. In terms of biological role, major viral protease that mediates proteolytic processing of the polyprotein. Cleaves host EIF5B, contributing to host translation shutoff. Also cleaves host PABPC1, contributing to host translation shutoff. Disassembles host cytoplasmic stress granules by cleaving host G3BP1, although this effect is less prononced than the inhibition induced by protease 2A. Cleaves host RIGI and thus contributes to the inhibition of type I interferon production. Cleaves host IRF7 and thus contributes to the inhibition of type I interferon production. Cleaves host HNRNPA1 thereby increasing the translation of apoptosis protease activating factor APAF1, leading to apoptosis of the host cell. Cleaves host NLRP1, triggers host N-glycine-mediated degradation of the autoinhibitory NLRP1 N-terminal fragment. Functionally, replicates the viral genomic RNA on the surface of intracellular membranes. May form linear arrays of subunits that propagate along a strong head-to-tail interaction called interface-I. Covalently attaches UMP to a tyrosine of VPg, which is used to prime RNA synthesis. The positive stranded RNA genome is first replicated at virus induced membranous vesicles, creating a dsRNA genomic replication form. This dsRNA is then used as template to synthesize positive stranded RNA genomes. ss(+)RNA genomes are either translated, replicated or encapsidated. The sequence is that of Genome polyprotein from Homo sapiens (Human).